Here is a 432-residue protein sequence, read N- to C-terminus: Gamma-glutamyl phosphate reductase (432 aa).

This sequence belongs to the gamma-glutamyl phosphate reductase family.

It localises to the cytoplasm. It carries out the reaction L-glutamate 5-semialdehyde + phosphate + NADP(+) = L-glutamyl 5-phosphate + NADPH + H(+). It functions in the pathway amino-acid biosynthesis; L-proline biosynthesis; L-glutamate 5-semialdehyde from L-glutamate: step 2/2. Catalyzes the NADPH-dependent reduction of L-glutamate 5-phosphate into L-glutamate 5-semialdehyde and phosphate. The product spontaneously undergoes cyclization to form 1-pyrroline-5-carboxylate. The chain is Gamma-glutamyl phosphate reductase from Corynebacterium glutamicum (strain R).